The chain runs to 309 residues: MGAQFSKTAAKGEAAAERPGEAAVASSPSKANGQENGHVKVNGDASPAAAEPGAKEELQANGSAPAADKEEPASGGAATPAAADKDEAAAAPEPGAATADKEAAEAEPAEPGSPSAETEGASASSTSSPKAEDGAAPSPSSETPKKKKKRFSFKKSFKLSGFSFKKSKKEAGEGAEAEGATADGAKDEAAAAAGGDAAAAPGEQAGGAGAEGAEGGESREAEAAEPEQPEQPEQPAAEEPRAEEPSEAVGEKAEEPAPGATADDAPSAAGPEQEAPAATDEPAASAAPSASPEPQPECSPEAPPAPVAE.

Residues 1-309 (MGAQFSKTAA…PEAPPAPVAE (309 aa)) form a disordered region. G2 carries N-myristoyl glycine lipidation. Residues S26, S27, S29, S46, S63, and S74 each carry the phosphoserine modification. Residues 26 to 35 (SSPSKANGQE) are compositionally biased toward polar residues. Composition is skewed to low complexity over residues 73–82 (ASGGAATPAA), 89–98 (AAAPEPGAAT), and 109–142 (AEPG…PSSE). Position 79 is a phosphothreonine (T79). A phosphoserine mark is found at S113, S122, S128, S138, S140, and S141. At T143 the chain carries Phosphothreonine. The segment covering 145–157 (KKKKKRFSFKKSF) has biased composition (basic residues). Positions 145-169 (KKKKKRFSFKKSFKLSGFSFKKSKK) are calmodulin-binding (PSD). S152 and S156 each carry phosphoserine; by PKC. S160 carries the phosphoserine modification. S163 carries the phosphoserine; by PKC modification. K165 carries the N6-acetyllysine modification. The segment covering 190–203 (AAAAGGDAAAAPGE) has biased composition (low complexity). Positions 204–215 (QAGGAGAEGAEG) are enriched in gly residues. A phosphoserine mark is found at S218 and S246. Residues 238–255 (EEPRAEEPSEAVGEKAEE) show a composition bias toward basic and acidic residues. Over residues 271 to 290 (PEQEAPAATDEPAASAAPSA) the composition is skewed to low complexity. S291 carries the phosphoserine modification. The segment covering 291-309 (SPEPQPECSPEAPPAPVAE) has biased composition (pro residues).

The protein belongs to the MARCKS family. In terms of assembly, interacts with CDC42. Interacts with GTP-bound form of RAB10. Interacts with calmodulin/CALM1. Post-translationally, acetylated at Lys-165 by KAT5; acetylation is required for its subsequent phosphorylation. Deacetylated by SIRT2. In terms of processing, phosphorylation by PKC displaces MARCKS from the membrane. It also inhibits the F-actin cross-linking activity. Myristoylated. A proper myristoylation is essential for the proper distribution to the plasma membrane. In terms of tissue distribution, highest levels found in spleen and brain. Intermediate levels seen in thymus, ovary, lung and heart. Very low levels seen in kidney, skeletal muscle and liver.

It is found in the cell membrane. Its subcellular location is the cytoplasm. The protein localises to the cytoskeleton. Functionally, membrane-associated protein that plays a role in the structural modulation of the actin cytoskeleton, chemotaxis, motility, cell adhesion, phagocytosis, and exocytosis through lipid sequestering and/or protein docking to membranes. Thus, exerts an influence on a plethora of physiological processes, such as embryonic development, tissue regeneration, neuronal plasticity, and inflammation. Sequesters phosphatidylinositol 4,5-bisphosphate (PIP2) at lipid rafts in the plasma membrane of quiescent cells, an action reversed by protein kinase C, ultimately inhibiting exocytosis. During inflammation, promotes the migration and adhesion of inflammatory cells and the secretion of cytokines such as tumor necrosis factor (TNF), particularly in macrophages. Plays an essential role in bacteria-induced intracellular reactive oxygen species (ROS) formation in the monocytic cell type. Participates in the regulation of neurite initiation and outgrowth by interacting with components of cellular machinery including CDC42 that regulates cell shape and process extension through modulation of the cytoskeleton. Plays also a role in axon development by mediating docking and fusion of RAB10-positive vesicles with the plasma membrane. In Rattus norvegicus (Rat), this protein is Myristoylated alanine-rich C-kinase substrate (Marcks).